Reading from the N-terminus, the 179-residue chain is ATP-dependent protease subunit HslV (179 aa).

The active site involves threonine 7. Na(+) contacts are provided by glycine 162, cysteine 165, and threonine 168.

This sequence belongs to the peptidase T1B family. HslV subfamily. A double ring-shaped homohexamer of HslV is capped on each side by a ring-shaped HslU homohexamer. The assembly of the HslU/HslV complex is dependent on binding of ATP.

The protein resides in the cytoplasm. The catalysed reaction is ATP-dependent cleavage of peptide bonds with broad specificity.. With respect to regulation, allosterically activated by HslU binding. Protease subunit of a proteasome-like degradation complex believed to be a general protein degrading machinery. The chain is ATP-dependent protease subunit HslV from Aromatoleum aromaticum (strain DSM 19018 / LMG 30748 / EbN1) (Azoarcus sp. (strain EbN1)).